A 189-amino-acid chain; its full sequence is 3-isopropylmalate dehydratase small subunit (189 aa).

It belongs to the LeuD family. LeuD type 1 subfamily. In terms of assembly, heterodimer of LeuC and LeuD.

It catalyses the reaction (2R,3S)-3-isopropylmalate = (2S)-2-isopropylmalate. The protein operates within amino-acid biosynthesis; L-leucine biosynthesis; L-leucine from 3-methyl-2-oxobutanoate: step 2/4. Catalyzes the isomerization between 2-isopropylmalate and 3-isopropylmalate, via the formation of 2-isopropylmaleate. The sequence is that of 3-isopropylmalate dehydratase small subunit from Francisella tularensis subsp. holarctica (strain FTNF002-00 / FTA).